The primary structure comprises 454 residues: Glutamyl-tRNA(Gln) amidotransferase subunit A (454 aa).

Active-site charge relay system residues include lysine 56 and serine 131. The active-site Acyl-ester intermediate is serine 155.

Belongs to the amidase family. GatA subfamily. As to quaternary structure, heterotrimer of A, B and C subunits.

The catalysed reaction is L-glutamyl-tRNA(Gln) + L-glutamine + ATP + H2O = L-glutaminyl-tRNA(Gln) + L-glutamate + ADP + phosphate + H(+). Its function is as follows. Allows the formation of correctly charged Gln-tRNA(Gln) through the transamidation of misacylated Glu-tRNA(Gln) in organisms which lack glutaminyl-tRNA synthetase. The reaction takes place in the presence of glutamine and ATP through an activated gamma-phospho-Glu-tRNA(Gln). This chain is Glutamyl-tRNA(Gln) amidotransferase subunit A, found in Campylobacter lari (strain RM2100 / D67 / ATCC BAA-1060).